The following is a 131-amino-acid chain: Profilin-6 (131 aa).

The cysteines at positions 13 and 115 are disulfide-linked. The Involved in PIP2 interaction signature appears at 81–97 (VVIRGKKGAGGITIKKT). A Phosphothreonine modification is found at Thr111.

It belongs to the profilin family. In terms of assembly, occurs in many kinds of cells as a complex with monomeric actin in a 1:1 ratio. Phosphorylated by MAP kinases.

Its subcellular location is the cytoplasm. The protein localises to the cytoskeleton. Functionally, binds to actin and affects the structure of the cytoskeleton. At high concentrations, profilin prevents the polymerization of actin, whereas it enhances it at low concentrations. The chain is Profilin-6 from Corylus avellana (European hazel).